The chain runs to 266 residues: 4-hydroxy-tetrahydrodipicolinate reductase (266 aa).

10–15 contacts NAD(+); that stretch reads GPRGRM. Residue Lys38 participates in NADP(+) binding. NAD(+)-binding positions include 99–101 and 125–128; these read GTT and APNF. His155 serves as the catalytic Proton donor/acceptor. His156 is a (S)-2,3,4,5-tetrahydrodipicolinate binding site. The active-site Proton donor is Lys159. 165-166 is a (S)-2,3,4,5-tetrahydrodipicolinate binding site; sequence GT.

This sequence belongs to the DapB family.

It localises to the cytoplasm. The catalysed reaction is (S)-2,3,4,5-tetrahydrodipicolinate + NAD(+) + H2O = (2S,4S)-4-hydroxy-2,3,4,5-tetrahydrodipicolinate + NADH + H(+). It carries out the reaction (S)-2,3,4,5-tetrahydrodipicolinate + NADP(+) + H2O = (2S,4S)-4-hydroxy-2,3,4,5-tetrahydrodipicolinate + NADPH + H(+). The protein operates within amino-acid biosynthesis; L-lysine biosynthesis via DAP pathway; (S)-tetrahydrodipicolinate from L-aspartate: step 4/4. Functionally, catalyzes the conversion of 4-hydroxy-tetrahydrodipicolinate (HTPA) to tetrahydrodipicolinate. This Bacillus anthracis (strain A0248) protein is 4-hydroxy-tetrahydrodipicolinate reductase.